The sequence spans 179 residues: Crossover junction endodeoxyribonuclease RuvC (179 aa).

Residues D12, E72, and D144 contribute to the active site. Mg(2+) contacts are provided by D12, E72, and D144.

Belongs to the RuvC family. As to quaternary structure, homodimer which binds Holliday junction (HJ) DNA. The HJ becomes 2-fold symmetrical on binding to RuvC with unstacked arms; it has a different conformation from HJ DNA in complex with RuvA. In the full resolvosome a probable DNA-RuvA(4)-RuvB(12)-RuvC(2) complex forms which resolves the HJ. Requires Mg(2+) as cofactor.

The protein resides in the cytoplasm. It catalyses the reaction Endonucleolytic cleavage at a junction such as a reciprocal single-stranded crossover between two homologous DNA duplexes (Holliday junction).. In terms of biological role, the RuvA-RuvB-RuvC complex processes Holliday junction (HJ) DNA during genetic recombination and DNA repair. Endonuclease that resolves HJ intermediates. Cleaves cruciform DNA by making single-stranded nicks across the HJ at symmetrical positions within the homologous arms, yielding a 5'-phosphate and a 3'-hydroxyl group; requires a central core of homology in the junction. The consensus cleavage sequence is 5'-(A/T)TT(C/G)-3'. Cleavage occurs on the 3'-side of the TT dinucleotide at the point of strand exchange. HJ branch migration catalyzed by RuvA-RuvB allows RuvC to scan DNA until it finds its consensus sequence, where it cleaves and resolves the cruciform DNA. The protein is Crossover junction endodeoxyribonuclease RuvC of Dechloromonas aromatica (strain RCB).